Consider the following 137-residue polypeptide: Histone H3-like 2 (137 aa).

The tract at residues 1 to 36 is disordered; the sequence is MARTKQTARKSTGGKGPRKELATKAARKTRRPYRGG. Residues Lys5 and Lys10 each carry the N6,N6,N6-trimethyllysine; alternate modification. An N6,N6-dimethyllysine; alternate mark is found at Lys5 and Lys10. Residues Lys5 and Lys10 each carry the N6-methyllysine; alternate modification. N6-acetyllysine; alternate is present on Lys10. At Ser11 the chain carries Phosphoserine. Phosphothreonine is present on Thr12. An N6-acetyllysine modification is found at Lys15. Lys19, Lys24, Lys28, and Lys38 each carry N6-methyllysine; alternate. An N6-acetyllysine; alternate mark is found at Lys19 and Lys24. Basic residues predominate over residues 25 to 36; that stretch reads AARKTRRPYRGG. 2 positions are modified to N6,N6,N6-trimethyllysine; alternate: Lys28 and Lys38. N6,N6-dimethyllysine; alternate is present on residues Lys28 and Lys38.

It belongs to the histone H3 family. In terms of assembly, the nucleosome is a histone octamer containing two molecules each of H2A, H2B, H3 and H4 assembled in one H3-H4 heterotetramer and two H2A-H2B heterodimers. The octamer wraps approximately 147 bp of DNA. As to expression, pollen specific.

The protein localises to the nucleus. The protein resides in the chromosome. Functionally, core component of nucleosome. Nucleosomes wrap and compact DNA into chromatin, limiting DNA accessibility to the cellular machineries which require DNA as a template. Histones thereby play a central role in transcription regulation, DNA repair, DNA replication and chromosomal stability. DNA accessibility is regulated via a complex set of post-translational modifications of histones, also called histone code, and nucleosome remodeling. The chain is Histone H3-like 2 (MGH3) from Arabidopsis thaliana (Mouse-ear cress).